The chain runs to 174 residues: Tat proofreading chaperone TtrD (174 aa).

The protein belongs to the TorD/DmsD family. In terms of assembly, monomer.

Its subcellular location is the cytoplasm. Functionally, binds specifically to the Tat signal peptide of the TtrA subunit of the tetrathionate reductase. In Archaeoglobus fulgidus (strain ATCC 49558 / DSM 4304 / JCM 9628 / NBRC 100126 / VC-16), this protein is Tat proofreading chaperone TtrD (ttrD).